The chain runs to 408 residues: Glutamate N-acetyltransferase (408 aa).

Substrate is bound by residues Thr150, Lys176, Thr189, Glu271, Asn403, and Thr408. The Nucleophile role is filled by Thr189.

This sequence belongs to the ArgJ family. In terms of assembly, heterotetramer of two alpha and two beta chains.

Its subcellular location is the cytoplasm. It carries out the reaction N(2)-acetyl-L-ornithine + L-glutamate = N-acetyl-L-glutamate + L-ornithine. Its pathway is amino-acid biosynthesis; L-arginine biosynthesis; L-ornithine and N-acetyl-L-glutamate from L-glutamate and N(2)-acetyl-L-ornithine (cyclic): step 1/1. Functionally, catalyzes the transfer of the acetyl group from N(2)-acetylornithine to glutamate, forming N-acetylglutamate and L-ornithine. The protein is Glutamate N-acetyltransferase of Methanococcus maripaludis (strain C7 / ATCC BAA-1331).